The sequence spans 545 residues: CTP synthase (545 aa).

Positions 1–264 (MQYIVVTGGV…ITRLSKLLNM (264 aa)) are amidoligase domain. Position 12 (Ser12) interacts with CTP. Residue Ser12 participates in UTP binding. An ATP-binding site is contributed by 13–18 (GLGKGT). L-glutamine is bound at residue Tyr53. Asp70 is a binding site for ATP. The Mg(2+) site is built by Asp70 and Glu140. CTP contacts are provided by residues 147 to 149 (DIE), 185 to 190 (KTKPTQ), and Arg221. UTP contacts are provided by residues 185-190 (KTKPTQ) and Arg221. The Glutamine amidotransferase type-1 domain occupies 294–527 (YVDLHDAYIS…VEQALIFKHR (234 aa)). Gly347 lines the L-glutamine pocket. Catalysis depends on Cys374, which acts as the Nucleophile; for glutamine hydrolysis. L-glutamine is bound by residues 375-378 (LGFQ), Glu398, and Arg455. Catalysis depends on residues His500 and Glu502.

The protein belongs to the CTP synthase family. Homotetramer.

The enzyme catalyses UTP + L-glutamine + ATP + H2O = CTP + L-glutamate + ADP + phosphate + 2 H(+). The catalysed reaction is L-glutamine + H2O = L-glutamate + NH4(+). It carries out the reaction UTP + NH4(+) + ATP = CTP + ADP + phosphate + 2 H(+). It functions in the pathway pyrimidine metabolism; CTP biosynthesis via de novo pathway; CTP from UDP: step 2/2. Allosterically activated by GTP, when glutamine is the substrate; GTP has no effect on the reaction when ammonia is the substrate. The allosteric effector GTP functions by stabilizing the protein conformation that binds the tetrahedral intermediate(s) formed during glutamine hydrolysis. Inhibited by the product CTP, via allosteric rather than competitive inhibition. Functionally, catalyzes the ATP-dependent amination of UTP to CTP with either L-glutamine or ammonia as the source of nitrogen. Regulates intracellular CTP levels through interactions with the four ribonucleotide triphosphates. In Thermoplasma acidophilum (strain ATCC 25905 / DSM 1728 / JCM 9062 / NBRC 15155 / AMRC-C165), this protein is CTP synthase.